Here is a 51-residue protein sequence, read N- to C-terminus: Insulin (51 aa).

Cystine bridges form between C7–C37, C19–C50, and C36–C41.

Belongs to the insulin family. As to quaternary structure, heterodimer of a B chain and an A chain linked by two disulfide bonds.

It localises to the secreted. Functionally, insulin decreases blood glucose concentration. It increases cell permeability to monosaccharides, amino acids and fatty acids. It accelerates glycolysis, the pentose phosphate cycle, and glycogen synthesis in liver. The polypeptide is Insulin (INS) (Balaenoptera borealis (Sei whale)).